A 148-amino-acid chain; its full sequence is Large ribosomal subunit protein uL15 (148 aa).

The disordered stretch occupies residues 1 to 46 (MITIEDLKPTPGSNKKYKRLGRGQGSGKGKTAGKGHKGQKSRGTGK). A compositionally biased stretch (basic residues) spans 31–45 (TAGKGHKGQKSRGTG).

This sequence belongs to the universal ribosomal protein uL15 family. As to quaternary structure, part of the 50S ribosomal subunit.

Its function is as follows. Binds to the 23S rRNA. The sequence is that of Large ribosomal subunit protein uL15 from Fervidobacterium nodosum (strain ATCC 35602 / DSM 5306 / Rt17-B1).